Consider the following 150-residue polypeptide: Aspartate 1-decarboxylase 1 (150 aa).

S24 (schiff-base intermediate with substrate; via pyruvic acid) is an active-site residue. S24 is modified (pyruvic acid (Ser)). A substrate-binding site is contributed by T56. Residue Y57 is the Proton donor of the active site. 72-74 (GAA) contacts substrate.

Belongs to the PanD family. As to quaternary structure, heterooctamer of four alpha and four beta subunits. Pyruvate is required as a cofactor. Post-translationally, is synthesized initially as an inactive proenzyme, which is activated by self-cleavage at a specific serine bond to produce a beta-subunit with a hydroxyl group at its C-terminus and an alpha-subunit with a pyruvoyl group at its N-terminus.

Its subcellular location is the cytoplasm. The catalysed reaction is L-aspartate + H(+) = beta-alanine + CO2. The protein operates within cofactor biosynthesis; (R)-pantothenate biosynthesis; beta-alanine from L-aspartate: step 1/1. Its function is as follows. Catalyzes the pyruvoyl-dependent decarboxylation of aspartate to produce beta-alanine. This Mesorhizobium japonicum (strain LMG 29417 / CECT 9101 / MAFF 303099) (Mesorhizobium loti (strain MAFF 303099)) protein is Aspartate 1-decarboxylase 1.